The primary structure comprises 526 residues: Cytochrome P450 monooxygenase BOT4 (526 aa).

Residue Asn-5 is glycosylated (N-linked (GlcNAc...) asparagine). The chain crosses the membrane as a helical span at residues 41-61 (CLVAIILCRFIAVWSYNLWFH). Residues Asn-205 and Asn-281 are each glycosylated (N-linked (GlcNAc...) asparagine). Heme is bound at residue Cys-464.

Belongs to the cytochrome P450 family. Heme serves as cofactor.

The protein localises to the membrane. Its pathway is secondary metabolite biosynthesis. Functionally, cytochrome P450 monooxygenase; part of the gene cluster that mediates the biosynthesis of botrydial. Botrydial is necessary for colonization of plant tissue by the T4 strain. It is a strain-dependent virulence factor since highly aggressive strains like SAS56 or B05 still retain substantial virulence when botrydial synthesis is impaired, since they produce also botcinic acid. The first step of botrydial biosynthesis is performed by the sesquiterpene synthase BOT2 which catalyzes the cyclization of farnesyl diphosphate (FPP) to presilphiperfolan-8-beta-ol (PSP). The cytochrome P450 monooxygenase BOT4 then catalyzes the hydroxylation at C-4 to give a probotryane intermediate. Acetylation of the hydroxyl at C-4 is carried out by the acetyltransferase BOT5, followed by the combined action of the P450 monooxygenases BOT3 and BOT1, to yield finally the glycol, via the regio- and stereospecific hydroxylations at C-10 and C-15 of the probotryane intermediates, respectively. The cleavage of the C10-C15 bond of probotryane skeleton is an intriguing and chemically important reaction, which could be mediated by some of the monooxygenases or by a combination of them. It is possible that either BOT3 or BOT1 would oxidize either the 10- or the 15-hydroxy group to the hydroperoxide derivative, which would then undergo heterolytic fragmentation to give the dialdehyde botrydial. Finally, the dehydrogenase BOT7 might be involved in the conversion of botrydial to dihydrobotrydial. This is Cytochrome P450 monooxygenase BOT4 from Botryotinia fuckeliana (Noble rot fungus).